Consider the following 468-residue polypeptide: 6-phospho-beta-galactosidase (468 aa).

Positions 19, 116, 159, 160, and 297 each coordinate D-galactose 6-phosphate. Glu160 serves as the catalytic Proton donor. The active-site Nucleophile is the Glu375. Ser428, Trp429, Lys435, and Tyr437 together coordinate D-galactose 6-phosphate.

Belongs to the glycosyl hydrolase 1 family.

It carries out the reaction a 6-phospho-beta-D-galactoside + H2O = D-galactose 6-phosphate + an alcohol. Its pathway is carbohydrate metabolism; lactose degradation; D-galactose 6-phosphate and beta-D-glucose from lactose 6-phosphate: step 1/1. In Streptococcus pneumoniae (strain JJA), this protein is 6-phospho-beta-galactosidase.